A 416-amino-acid chain; its full sequence is 5-hydroxytryptamine receptor 1A-beta (416 aa).

Topologically, residues 1–35 (MEGTNNTTGWTHFDSTSNRTSKSFDEEVKLSYQVV) are extracellular. Residues Asn-5, Asn-6, and Asn-18 are each glycosylated (N-linked (GlcNAc...) asparagine). A helical membrane pass occupies residues 36-56 (TSFLLGALILCSIFGNACVVA). The Cytoplasmic segment spans residues 57-70 (AIALERSLQNVANY). The helical transmembrane segment at 71–95 (LIGSLAVTDLMVSVLVLPMAALYQV) threads the bilayer. Topologically, residues 96 to 104 (LNRWTLGQI) are extracellular. Residues 105–129 (PCDIFISLDMLCCTSSILHLCVIAL) form a helical membrane-spanning segment. Cysteines 106 and 189 form a disulfide. Asp-113 and Cys-117 together coordinate serotonin. Positions 130 to 132 (DRY) match the DRY motif; important for ligand-induced conformation changes motif. Over 130–149 (DRYWAITEPIDYMKKRTPRR) the chain is Cytoplasmic. A helical membrane pass occupies residues 150-171 (AAVLISVTWLVGFSISIPPMLI). The Extracellular portion of the chain corresponds to 172 to 195 (MRSQPSSMAEDRANSKQCKITQDP). The chain crosses the membrane as a helical span at residues 196-218 (WYTIYSTFGAFYIPLTLMLVLYG). Topologically, residues 219–340 (RIFKAARFRI…LARERKTVKT (122 aa)) are cytoplasmic. Residues Lys-339, Thr-340, and Gly-346 each contribute to the 1D-myo-inositol 4-phosphate site. Residues 341-364 (LGIIMGTFILCWLPFFIVALVMPF) form a helical membrane-spanning segment. Residues 365–372 (CQESCFMP) lie on the Extracellular side of the membrane. Residues 373-397 (HWLKDVINWLGYSNSLLNPIIYAYF) traverse the membrane as a helical segment. The NPxxY motif; important for ligand-induced conformation changes and signaling signature appears at 390–394 (NPIIY). Positions 397, 398, and 399 each coordinate 1D-myo-inositol 4-phosphate. Over 398–416 (NKDFQSAFKKIIKCHFCRA) the chain is Cytoplasmic.

The protein belongs to the G-protein coupled receptor 1 family. 5-hydroxytryptamine receptor subfamily.

Its subcellular location is the cell membrane. Its activity is regulated as follows. G-protein coupled receptor activity is regulated by lipids: phosphatidylinositol 4-phosphate increases HTR1A-mediated activity. Its function is as follows. G-protein coupled receptor for 5-hydroxytryptamine (serotonin). Also functions as a receptor for various drugs and psychoactive substances. Ligand binding causes a conformation change that triggers signaling via guanine nucleotide-binding proteins (G proteins) and modulates the activity of downstream effectors, such as adenylate cyclase. HTR1A is coupled to G(i)/G(o) G alpha proteins and mediates inhibitory neurotransmission: signaling inhibits adenylate cyclase activity and activates a phosphatidylinositol-calcium second messenger system that regulates the release of Ca(2+) ions from intracellular stores. Beta-arrestin family members regulate signaling by mediating both receptor desensitization and resensitization processes. The sequence is that of 5-hydroxytryptamine receptor 1A-beta (htr1a-B) from Takifugu rubripes (Japanese pufferfish).